The primary structure comprises 104 residues: Large ribosomal subunit protein bL27 (104 aa).

The propeptide occupies 1–15 (MNNKYFLTKIDLQFF).

Belongs to the bacterial ribosomal protein bL27 family. The N-terminus is cleaved by ribosomal processing cysteine protease Prp.

The sequence is that of Large ribosomal subunit protein bL27 from Mycoplasma pneumoniae (strain ATCC 29342 / M129 / Subtype 1) (Mycoplasmoides pneumoniae).